The chain runs to 350 residues: 3-dehydroquinate synthase (350 aa).

Residues 106–110 (GVVGD), 130–131 (TS), Lys-143, and Lys-152 each bind NAD(+). 3 residues coordinate Zn(2+): Glu-185, His-246, and His-263.

This sequence belongs to the sugar phosphate cyclases superfamily. Dehydroquinate synthase family. Requires NAD(+) as cofactor. Co(2+) is required as a cofactor. The cofactor is Zn(2+).

It is found in the cytoplasm. The catalysed reaction is 7-phospho-2-dehydro-3-deoxy-D-arabino-heptonate = 3-dehydroquinate + phosphate. The protein operates within metabolic intermediate biosynthesis; chorismate biosynthesis; chorismate from D-erythrose 4-phosphate and phosphoenolpyruvate: step 2/7. In terms of biological role, catalyzes the conversion of 3-deoxy-D-arabino-heptulosonate 7-phosphate (DAHP) to dehydroquinate (DHQ). This Clostridium perfringens (strain 13 / Type A) protein is 3-dehydroquinate synthase.